Reading from the N-terminus, the 252-residue chain is Transcriptional regulatory protein HptR (252 aa).

Residues 3–118 (KVVICDDERI…QLEVILGRLV (116 aa)) enclose the Response regulatory domain. At Asp55 the chain carries 4-aspartylphosphate. The HTH araC/xylS-type domain maps to 153–250 (NQIVDQIKQS…QMSPSDYCKQ (98 aa)). 2 DNA-binding regions (H-T-H motif) span residues 170–191 (SDLI…KDHV) and 217–240 (HYEI…KKYL).

Phosphorylated by HptS.

The protein localises to the cytoplasm. In terms of biological role, member of the two-component regulatory system HptS/HptR that regulates genes involved in hexose phosphate transport system in response to changes in extracellular phosphate sources. Activates uhpT expression to facilitate glucose-6-phosphate/G6P utilization by directly binding to its promoter. Antagonizes CcpA-dependent transcription of a subset of CcpA-regulated genes involved in antibiotic susceptibility. The sequence is that of Transcriptional regulatory protein HptR (hptR) from Staphylococcus aureus (strain Mu50 / ATCC 700699).